Here is a 1019-residue protein sequence, read N- to C-terminus: Katanin p80 WD40 repeat-containing subunit B1 homolog KTN80.1 (1019 aa).

7 WD repeats span residues 13–53 (AHSG…SPMS), 56–95 (GHTS…MVRA), 98–137 (GHRS…CIQT), 140–181 (GHTR…HEFK), 183–221 (HEGP…LIGT), 224–264 (PEAT…DGVD), and 266–303 (GWST…LEPY). A DWD box motif is present at residues 114-130 (FLASGSSDTNLRVWDTR). Disordered regions lie at residues 388-424 (FGPA…TKSG), 455-474 (KSGL…LSEQ), 517-581 (IHRS…GSRE), and 607-652 (RGEK…RARS). Over residues 465 to 474 (QTQNAFLSEQ) the composition is skewed to polar residues. A compositionally biased stretch (basic and acidic residues) spans 553–572 (IPSKTERVLSREKPGDEQKN). The span at 614–628 (TEGASTTIEQNNNAV) shows a compositional bias: polar residues.

Belongs to the WD repeat KATNB1 family. As to quaternary structure, component of KTN80-KTN1 complexes composed of a hexamer of KTN1-KTN80 heterodimers that sense microtubule (MT) geometry to confer precise MT severing. Interacts directly with AAA1/KTN1 and KTN80.3, and weakly with KTN80.4. Expressed at low levels in siliques, flowers, leaves, stems and roots.

It localises to the cytoplasm. Its subcellular location is the cytoskeleton. Its function is as follows. May participate in a complex which severs microtubules in an ATP-dependent manner. Microtubule severing may promote rapid reorganization of cellular microtubule arrays. Confers precision to microtubule (MT) severing by specific targeting of KTN1 to MT cleavage sites such as crossover or branching nucleation sites. Together with other KTN80s, regulates cell elongation by modulating MT organization. The sequence is that of Katanin p80 WD40 repeat-containing subunit B1 homolog KTN80.1 from Arabidopsis thaliana (Mouse-ear cress).